We begin with the raw amino-acid sequence, 296 residues long: dTDP-4-dehydrorhamnose reductase (296 aa).

NADH-binding positions include 10–12 (GQI), 35–36 (DL), and 59–61 (AYT). NADPH is bound by residues 11-12 (QI), 35-36 (DL), and 59-61 (AYT). 100-101 (TD) serves as a coordination point for dTDP-beta-L-rhamnose. Residues tyrosine 124 and lysine 128 each contribute to the NADH site. Residues tyrosine 124 and lysine 128 each coordinate NADPH. The active-site Proton donor/acceptor is the tyrosine 124. Tryptophan 149 is a dTDP-beta-L-rhamnose binding site.

This sequence belongs to the dTDP-4-dehydrorhamnose reductase family. Homodimer. Requires Mg(2+) as cofactor.

It catalyses the reaction dTDP-beta-L-rhamnose + NADP(+) = dTDP-4-dehydro-beta-L-rhamnose + NADPH + H(+). The protein operates within carbohydrate biosynthesis; dTDP-L-rhamnose biosynthesis. Its function is as follows. Involved in the biosynthesis of the dTDP-L-rhamnose which is an important component of lipopolysaccharide (LPS). Catalyzes the reduction of dTDP-6-deoxy-L-lyxo-4-hexulose to yield dTDP-L-rhamnose. RmlD uses NADH and NADPH nearly equally well. This chain is dTDP-4-dehydrorhamnose reductase, found in Sinorhizobium fredii (strain NBRC 101917 / NGR234).